The primary structure comprises 183 residues: MGVSRSTLRTEEIEEIREVSIFSQREIKRLYKRFKRLDKEEKGSINVEDFNQIPELSMNPMLPRIISIFDVNRDGQVNFKQFVKSLSTFHPKADKADKIKILFKVYDINNDGFITRDEIETILTMMVGSNLTKEQISSIVEETLNEADVNGKGKLDYPDFYNSIGSSGCNAENMLSISFNPFE.

The N-myristoyl glycine moiety is linked to residue Gly-2. 4 consecutive EF-hand domains span residues 25–60, 64–92, 94–129, and 135–170; these read REIKRLYKRFKRLDKEEKGSINVEDFNQIPELSMNP, RIISIFDVNRDGQVNFKQFVKSLSTFHPK, DKADKIKILFKVYDINNDGFITRDEIETILTMMVGS, and QISSIVEETLNEADVNGKGKLDYPDFYNSIGSSGCN. Residues Asp-107, Asn-109, Asp-111, and Glu-118 each contribute to the Ca(2+) site.

This sequence belongs to the calcineurin regulatory subunit family. Calcineurin is composed of a catalytic subunit (A) and a regulatory subunit (B).

Functionally, regulatory subunit of calcineurin, a calcium-dependent, calmodulin stimulated protein phosphatase. Confers calcium sensitivity. This is Calcineurin subunit B type 2 (cnbB) from Dictyostelium discoideum (Social amoeba).